The chain runs to 279 residues: MFRAPCHRLRARGTRKARAGAWRGCTFPCLGKGMERPAAREPHGPDALRRFQGLLLDRRGRLHGQVLRLREVARRLERLRRRSLVANVAGSSLSATGALAAIVGLSLSPVTLGTSLLVSAVGLGVATAGGAVTITSDLSLIFCNSRELRRVQEIAATCQDQMREILSCLEFFCRWQGCGDRQLLQCGRNASIALYNSVYFIVFFGSRGFLIPRRAEGDTKVSQAVLKAKIQKLAESLESCTGALDELSEQLESRVQLCTKSSRGHDLKISADQRAGLFF.

The next 3 membrane-spanning stretches (helical) occupy residues 83–105, 122–142, and 192–212; these read SLVANVAGSSLSATGALAAIVGL, GLGVATAGGAVTITSDLSLIF, and IALYNSVYFIVFFGSRGFLIP. Positions 226–253 form a coiled coil; that stretch reads LKAKIQKLAESLESCTGALDELSEQLES.

It belongs to the apolipoprotein L family. Expressed in neonatal dermal microvascular endothelial cells.

The protein resides in the cell membrane. The protein localises to the cell junction. It is found in the cytoplasmic vesicle. It localises to the secretory vesicle. In terms of biological role, is a modulator of endothelial barrier permeability, required for proper organization of endothelial cell-cell junctions and cytoskeleton. It also plays a role in the modulation of secretory autophagy. May affect blood-brain barrier permeability. The chain is Apolipoprotein L domain-containing protein 1 (APOLD1) from Homo sapiens (Human).